The following is a 258-amino-acid chain: MLIGIRISEVWFGVITLFPEMLKSVTDFGVVGKAIKQSSIEVCTWNPRDYATDNYRTVDDRPYGGGPGMLMKVGPLEAALNAAKSVAPAGSKVVYLSPQGRRLDQALARSALSVPGLILLCGRYEGIDERLIEDEVDEEWSLGDFVLSGGEIAAMAIIDSVSRLAPGVLGHNESAEQDSFENSLLDCPHYTRPEIYRDKRVPEVLLSGNHEKIRRWRLEQSLLRTLQRRPDLLEQRELSEEEAQIIQELRRGQLISET.

Residues Gly122 and 142–147 (LGDFVL) contribute to the S-adenosyl-L-methionine site.

It belongs to the RNA methyltransferase TrmD family. Homodimer.

It localises to the cytoplasm. It catalyses the reaction guanosine(37) in tRNA + S-adenosyl-L-methionine = N(1)-methylguanosine(37) in tRNA + S-adenosyl-L-homocysteine + H(+). Its function is as follows. Specifically methylates guanosine-37 in various tRNAs. The sequence is that of tRNA (guanine-N(1)-)-methyltransferase from Hahella chejuensis (strain KCTC 2396).